The chain runs to 588 residues: bZip transcription factor GAP1 (588 aa).

The interval 1–49 (MAEVDNGGAQKSSASRKKRYQELDPETRMKRVAQNRAAQKAFRERKERK) is disordered. A compositionally biased stretch (basic and acidic residues) spans 20 to 29 (YQELDPETRM). A bZIP domain is found at 25 to 88 (PETRMKRVAQ…SILVKELRKY (64 aa)). Residues 28–51 (RMKRVAQNRAAQKAFRERKERKMK) form a basic motif region. The segment at 53-60 (LERKVVDL) is leucine-zipper. Positions 164-174 (FNVTGQLTPPG) are enriched in polar residues. The tract at residues 164-219 (FNVTGQLTPPGNTSSSTTANSVAANAKKQSIPHSDSSDSNESKNTWNTDPTSSEDW) is disordered. Residues 175 to 189 (NTSSSTTANSVAANA) show a composition bias toward low complexity. Transcription activation regions lie at residues 189-327 (AKKQ…SNTW) and 376-477 (GRTQ…MQTE). The span at 190–217 (KKQSIPHSDSSDSNESKNTWNTDPTSSE) shows a compositional bias: polar residues. A n-CRD region spans residues 253–265 (CTKLNQACGTKAC). Residues 487–529 (DMLNSSRMKETIDNQNIGEKTTKDDNEDDDEDDENDNTVVPSR) are disordered. Acidic residues predominate over residues 511-522 (DNEDDDEDDEND). The c-CRD stretch occupies residues 536-567 (CSEIWDRITAHPKYSDIDIDGLCSELMAKAKC). A Nuclear export signal motif is present at residues 552–559 (IDIDGLCS).

The protein resides in the nucleus. Its function is as follows. Transcription factor that plays a critical role in response to various stresses and reduces the stress through transcriptional activation of its target genes including multidrug transporter FLR1. The chain is bZip transcription factor GAP1 from Candida glabrata (strain ATCC 2001 / BCRC 20586 / JCM 3761 / NBRC 0622 / NRRL Y-65 / CBS 138) (Yeast).